The following is a 421-amino-acid chain: D-amino acid dehydrogenase (421 aa).

Residue 4-18 (VLVLGSGVVGLTSAW) participates in FAD binding.

It belongs to the DadA oxidoreductase family. It depends on FAD as a cofactor.

It catalyses the reaction a D-alpha-amino acid + A + H2O = a 2-oxocarboxylate + AH2 + NH4(+). Oxidative deamination of D-amino acids. In Vibrio cholerae serotype O1 (strain ATCC 39315 / El Tor Inaba N16961), this protein is D-amino acid dehydrogenase.